The sequence spans 603 residues: Aspartate--tRNA(Asp/Asn) ligase (603 aa).

Residues 205–208 (QLFK) are aspartate. R227 contributes to the L-aspartate binding site. ATP-binding positions include 227 to 229 (RDE) and Q236. L-aspartate is bound at residue H463. E497 contributes to the ATP binding site. R504 contacts L-aspartate. An ATP-binding site is contributed by 549 to 552 (GMDR).

Belongs to the class-II aminoacyl-tRNA synthetase family. Type 1 subfamily. Homodimer.

It localises to the cytoplasm. The catalysed reaction is tRNA(Asx) + L-aspartate + ATP = L-aspartyl-tRNA(Asx) + AMP + diphosphate. Functionally, aspartyl-tRNA synthetase with relaxed tRNA specificity since it is able to aspartylate not only its cognate tRNA(Asp) but also tRNA(Asn). Reaction proceeds in two steps: L-aspartate is first activated by ATP to form Asp-AMP and then transferred to the acceptor end of tRNA(Asp/Asn). The chain is Aspartate--tRNA(Asp/Asn) ligase from Anaeromyxobacter sp. (strain K).